The sequence spans 139 residues: Protein cornichon homolog 4 (139 aa).

Transmembrane regions (helical) follow at residues V5 to I25, I57 to V77, and L118 to N138.

Belongs to the cornichon family. In terms of assembly, interacts with Sec23/24 complex components SEC24B and SEC24D. Interacts with CCR5. Interacts with ADRB2 in the early secretory pathway.

It is found in the membrane. The protein resides in the endoplasmic reticulum. Its subcellular location is the endoplasmic reticulum-Golgi intermediate compartment. Its function is as follows. Involved in G protein-coupled receptors (GPCRs) trafficking from the endoplasmic reticulum to the cell surface; it promotes the exit of GPCRs from the early secretory pathway, likely through interaction with the COPII machinery. The sequence is that of Protein cornichon homolog 4 (Cnih4) from Mus musculus (Mouse).